A 326-amino-acid chain; its full sequence is N-acetyl-gamma-glutamyl-phosphate reductase (326 aa).

Cysteine 155 is a catalytic residue.

The protein belongs to the NAGSA dehydrogenase family. Type 1 subfamily.

It localises to the cytoplasm. It catalyses the reaction N-acetyl-L-glutamate 5-semialdehyde + phosphate + NADP(+) = N-acetyl-L-glutamyl 5-phosphate + NADPH + H(+). Its pathway is amino-acid biosynthesis; L-arginine biosynthesis; N(2)-acetyl-L-ornithine from L-glutamate: step 3/4. In terms of biological role, catalyzes the NADPH-dependent reduction of N-acetyl-5-glutamyl phosphate to yield N-acetyl-L-glutamate 5-semialdehyde. In Shewanella frigidimarina (strain NCIMB 400), this protein is N-acetyl-gamma-glutamyl-phosphate reductase.